Reading from the N-terminus, the 285-residue chain is Polyamine aminopropyltransferase (285 aa).

The 237-residue stretch at 5 to 241 (DNWYIEHFQP…GWWSVTMASK (237 aa)) folds into the PABS domain. Gln35 contacts S-methyl-5'-thioadenosine. His66 and Asp90 together coordinate spermidine. S-methyl-5'-thioadenosine-binding positions include Asp110 and 141–142 (DG). The active-site Proton acceptor is the Asp160. 160–163 (DSTD) serves as a coordination point for spermidine. An S-methyl-5'-thioadenosine-binding site is contributed by Pro167.

The protein belongs to the spermidine/spermine synthase family. As to quaternary structure, homodimer or homotetramer.

Its subcellular location is the cytoplasm. The catalysed reaction is S-adenosyl 3-(methylsulfanyl)propylamine + putrescine = S-methyl-5'-thioadenosine + spermidine + H(+). It participates in amine and polyamine biosynthesis; spermidine biosynthesis; spermidine from putrescine: step 1/1. Catalyzes the irreversible transfer of a propylamine group from the amino donor S-adenosylmethioninamine (decarboxy-AdoMet) to putrescine (1,4-diaminobutane) to yield spermidine. This Xanthomonas axonopodis pv. citri (strain 306) protein is Polyamine aminopropyltransferase.